The chain runs to 130 residues: Iron-sulfur cluster insertion protein ErpA (130 aa).

Residues C58, C122, and C124 each contribute to the iron-sulfur cluster site.

Belongs to the HesB/IscA family. In terms of assembly, homodimer. Requires iron-sulfur cluster as cofactor.

In terms of biological role, required for insertion of 4Fe-4S clusters for at least IspG. This chain is Iron-sulfur cluster insertion protein ErpA, found in Stenotrophomonas maltophilia (strain R551-3).